Consider the following 202-residue polypeptide: Ribonuclease HII (202 aa).

Residues 13–202 (KIEAGLDEAG…HFKPKQLDLF (190 aa)) form the RNase H type-2 domain. Asp-19, Glu-20, and Asp-112 together coordinate a divalent metal cation.

Belongs to the RNase HII family. The cofactor is Mn(2+). Mg(2+) serves as cofactor.

It localises to the cytoplasm. The enzyme catalyses Endonucleolytic cleavage to 5'-phosphomonoester.. Functionally, endonuclease that specifically degrades the RNA of RNA-DNA hybrids. In Cytophaga hutchinsonii (strain ATCC 33406 / DSM 1761 / CIP 103989 / NBRC 15051 / NCIMB 9469 / D465), this protein is Ribonuclease HII.